The sequence spans 213 residues: Receptor-binding cancer antigen expressed on SiSo cells (213 aa).

The Extracellular portion of the chain corresponds to 1-6 (MAITQF). The helical; Signal-anchor for type III membrane protein transmembrane segment at 7 to 27 (RLFKVCTCLATVLSFLKRLIC) threads the bilayer. The Cytoplasmic portion of the chain corresponds to 28–213 (RSGRGRKLSG…EQNKMGVKLS (186 aa)). At serine 36 the chain carries Phosphoserine. Threonine 41 bears the Phosphothreonine mark. Phosphotyrosine is present on tyrosine 94. The stretch at 168–209 (QAEEVLRQQKIADREKRAAEQQRKKMEKEAQRLLKKEQNKMG) forms a coiled coil. The span at 179 to 206 (ADREKRAAEQQRKKMEKEAQRLLKKEQN) shows a compositional bias: basic and acidic residues. The disordered stretch occupies residues 179 to 213 (ADREKRAAEQQRKKMEKEAQRLLKKEQNKMGVKLS).

In terms of assembly, homodimer.

Its subcellular location is the golgi apparatus membrane. Its function is as follows. May participate in suppression of cell proliferation and induces apoptotic cell death through activation of interleukin-1-beta converting enzyme (ICE)-like proteases. The polypeptide is Receptor-binding cancer antigen expressed on SiSo cells (Ebag9) (Rattus norvegicus (Rat)).